The primary structure comprises 261 residues: HLA class II histocompatibility antigen, DM alpha chain (261 aa).

An N-terminal signal peptide occupies residues 1–26 (MGHEQNQGAALLQMLPLLWLLPHSWA). The interval 27-124 (VPEAPTPMWP…KLDGKIPVSR (98 aa)) is alpha-1. The Lumenal portion of the chain corresponds to 27–233 (VPEAPTPMWP…PSDLLENVLC (207 aa)). Asparagine 41 is a glycosylation site (N-linked (GlcNAc...) asparagine). 2 disulfide bridges follow: cysteine 50–cysteine 105 and cysteine 147–cysteine 202. The Ig-like C1-type domain maps to 121–215 (PVSRGFPIAE…HEIDRYTAIA (95 aa)). The tract at residues 125–217 (GFPIAEVFTL…IDRYTAIAYW (93 aa)) is alpha-2. The tract at residues 218-233 (VPRNALPSDLLENVLC) is connecting peptide. A helical transmembrane segment spans residues 234-254 (GVAFGLGVLGIIVGIVLIIYF). Topologically, residues 255-261 (RKPCSGD) are cytoplasmic.

This sequence belongs to the MHC class II family. In terms of assembly, heterodimer of an alpha chain (DMA) and a beta chain (DMB). Interacts with MHCII; this interaction mediates rapid selection of high-affinity peptides in a pH-dependent manner, with an optimum at pH 5.5.

Its subcellular location is the late endosome membrane. It is found in the lysosome membrane. Plays a critical role in catalyzing the release of class II-associated invariant chain peptide (CLIP) from newly synthesized MHC class II molecules and freeing the peptide binding site for acquisition of antigenic peptides. In B-cells, the interaction between HLA-DM and MHC class II molecules is regulated by HLA-DO. The protein is HLA class II histocompatibility antigen, DM alpha chain (HLA-DMA) of Homo sapiens (Human).